Consider the following 335-residue polypeptide: SLAM family member 7 (335 aa).

An N-terminal signal peptide occupies residues 1–22 (MAGSPTCLTLIYILWQLTGSAA). Residues 23–124 (SGPVKELVGS…PSTQEYVLHV (102 aa)) form the Ig-like V-type domain. Topologically, residues 23–226 (SGPVKELVGS…GAADDPDSSM (204 aa)) are extracellular. N-linked (GlcNAc...) asparagine glycosylation is found at N98, N142, N148, N172, N176, and N204. One can recognise an Ig-like C2-type domain in the interval 131–206 (PKVTMGLQSN…ARNPVSRNFS (76 aa)). 2 disulfide bridges follow: C145–C215 and C151–C195. A helical transmembrane segment spans residues 227–247 (VLLCLLLVPLLLSLFVLGLFL). The Cytoplasmic portion of the chain corresponds to 248–335 (WFLKRERQEE…PRLFAYENVI (88 aa)). Residues 278–296 (SGENTEYDTIPHTNRTILK) are interaction with FYN when phosphorylated at Tyr-284. The ITSM motif lies at 302 to 307 (TVYSTV).

Isoform 1 binds to SH2D1A when its cytoplasmic tail is phosphorylated in the presence of FYN (in vitro); low affinity binding, the physiological relevance of the interaction is questioned. Interacts with SH2D1B; in NK cells. Interacts (via ITSM phosphorylated on Tyr-302) with SH2D1B, PTPN6/SHP-1, PTPN11/SHP-2, INPP5D/SHIP1, CSK and FYN. Expressed in spleen, lymph node, peripheral blood leukocytes, bone marrow, small intestine, stomach, appendix, lung and trachea. Expression was detected in NK cells, activated B-cells, NK-cell line but not in promyelocytic, B-, or T-cell lines. Expressed in monocytes. Isoform 3 is expressed at much lower level than isoform 1.

It is found in the membrane. Functionally, self-ligand receptor of the signaling lymphocytic activation molecule (SLAM) family. SLAM receptors triggered by homo- or heterotypic cell-cell interactions are modulating the activation and differentiation of a wide variety of immune cells and thus are involved in the regulation and interconnection of both innate and adaptive immune response. Activities are controlled by presence or absence of small cytoplasmic adapter proteins, SH2D1A/SAP and/or SH2D1B/EAT-2. Isoform 1 mediates NK cell activation through a SH2D1A-independent extracellular signal-regulated ERK-mediated pathway. Positively regulates NK cell functions by a mechanism dependent on phosphorylated SH2D1B. Downstream signaling implicates PLCG1, PLCG2 and PI3K. In addition to heterotypic NK cells-target cells interactions also homotypic interactions between NK cells may contribute to activation. However, in the absence of SH2D1B, inhibits NK cell function. Also acts inhibitory in T-cells. May play a role in lymphocyte adhesion. In LPS-activated monocytes negatively regulates production of pro-inflammatory cytokines. Its function is as follows. Isoform 3 does not mediate any NK cell activation. The protein is SLAM family member 7 (SLAMF7) of Homo sapiens (Human).